Reading from the N-terminus, the 294-residue chain is FLDLQLNATEGNVSGPSVGNTSSPCEDMGIEVEVFLTLGLISLLENILVIGAIARNKNLHVPMYFFVCSLAVADMLVSLSNSWETITIYLIANKHLVLSDTSVRHLDNVFDSMICISLVASMCSLLAVAVDRYVTIFYALRYQHLMTGRRCGAIIAGIWALCTGCGPVFIVYYESTYVVVCLVAMFLTMLLLMASLYAHMFLQARAHVRRIAALPGYRSARQRTSMKGAVTLAMLLGVFIVCWAPFFLHLILMISCPQNLYCSCFMSHFNMYLILIMCNSVIDPLIYAFRSQEK.

Topologically, residues 1–29 (FLDLQLNATEGNVSGPSVGNTSSPCEDMG) are extracellular. 3 N-linked (GlcNAc...) asparagine glycosylation sites follow: Asn-7, Asn-12, and Asn-20. Residues 30-53 (IEVEVFLTLGLISLLENILVIGAI) traverse the membrane as a helical segment. The Cytoplasmic segment spans residues 54–65 (ARNKNLHVPMYF). The helical transmembrane segment at 66–89 (FVCSLAVADMLVSLSNSWETITIY) threads the bilayer. The Extracellular segment spans residues 90 to 106 (LIANKHLVLSDTSVRHL). The chain crosses the membrane as a helical span at residues 107–130 (DNVFDSMICISLVASMCSLLAVAV). Residues 131–147 (DRYVTIFYALRYQHLMT) lie on the Cytoplasmic side of the membrane. The chain crosses the membrane as a helical span at residues 148–171 (GRRCGAIIAGIWALCTGCGPVFIV). At 172–178 (YYESTYV) the chain is on the extracellular side. The chain crosses the membrane as a helical span at residues 179–203 (VVCLVAMFLTMLLLMASLYAHMFLQ). The Cytoplasmic portion of the chain corresponds to 204-231 (ARAHVRRIAALPGYRSARQRTSMKGAVT). The helical transmembrane segment at 232–257 (LAMLLGVFIVCWAPFFLHLILMISCP) threads the bilayer. Residues 258 to 265 (QNLYCSCF) are Extracellular-facing. The chain crosses the membrane as a helical span at residues 266-289 (MSHFNMYLILIMCNSVIDPLIYAF). Residues 290-294 (RSQEK) are Cytoplasmic-facing.

This sequence belongs to the G-protein coupled receptor 1 family.

The protein resides in the cell membrane. Receptor for MSH (alpha, beta and gamma) and ACTH. The activity of this receptor is mediated by G proteins which activate adenylate cyclase. This receptor is a possible mediator of the immunomodulation properties of melanocortins. The protein is Melanocortin receptor 5 (MC5R) of Sus scrofa (Pig).